The sequence spans 184 residues: Pupal cuticle protein (184 aa).

The signal sequence occupies residues methionine 1–glutamine 15. The 62-residue stretch at aspartate 42 to proline 103 folds into the Chitin-binding type R&amp;R domain. Positions aspartate 147–lysine 160 are enriched in polar residues. Residues aspartate 147 to histidine 184 are disordered. Residues leucine 175–histidine 184 are compositionally biased toward basic residues.

In terms of biological role, component of the cuticle of the pupa of fruit fly. The chain is Pupal cuticle protein (Pcp) from Drosophila melanogaster (Fruit fly).